The sequence spans 129 residues: Protein Turandot A1/2 (129 aa).

Positions 1–21 (MNSSTALMCFALLLISPLCLG) are cleaved as a signal peptide. Residue N49 is glycosylated (N-linked (GlcNAc...) asparagine).

It belongs to the Turandot family.

It localises to the secreted. A humoral factor that plays a role in stress tolerance; gives increased resistance to the lethal effects of bacterial challenge and stress. Regulated by the JAK/STAT pathway and NF-KB-like Relish pathway in the fat body, upd3 in the hemocytes and Mekk1 in response to septic injury and consequent immune response. The sequence is that of Protein Turandot A1/2 (TotA1) from Drosophila sechellia (Fruit fly).